The following is a 204-amino-acid chain: MNFLNFSILIFAYLLGSINSAIIVCYIFRLPSPRSVGSGNPGTTNVLRIGGKVPAAITLIFDILKGLVPVVIAKVLTGNDFITACTALYAILGHIFPIFFGFKGGKGVATLIGTLFGFSWILGLIFVITWLCVAIITRYSSLSALVATVIASFSVIFTSDLQVAAPFLIIAIIILVKHKGNIQRLISGQESKIGDKAKAKNDSN.

5 helical membrane-spanning segments follow: residues 8–28, 53–73, 81–101, 116–136, and 155–175; these read ILIFAYLLGSINSAIIVCYIF, VPAAITLIFDILKGLVPVVIA, FITACTALYAILGHIFPIFFG, FGFSWILGLIFVITWLCVAII, and VIFTSDLQVAAPFLIIAIIIL.

Belongs to the PlsY family. In terms of assembly, probably interacts with PlsX.

It localises to the cell inner membrane. The enzyme catalyses an acyl phosphate + sn-glycerol 3-phosphate = a 1-acyl-sn-glycero-3-phosphate + phosphate. The protein operates within lipid metabolism; phospholipid metabolism. Functionally, catalyzes the transfer of an acyl group from acyl-phosphate (acyl-PO(4)) to glycerol-3-phosphate (G3P) to form lysophosphatidic acid (LPA). This enzyme utilizes acyl-phosphate as fatty acyl donor, but not acyl-CoA or acyl-ACP. This chain is Glycerol-3-phosphate acyltransferase, found in Francisella tularensis subsp. holarctica (strain FTNF002-00 / FTA).